Here is a 314-residue protein sequence, read N- to C-terminus: DNA-directed RNA polymerase subunit alpha (314 aa).

The alpha N-terminal domain (alpha-NTD) stretch occupies residues 1-228 (MIEIEKPKIE…EHLNIFVGLT (228 aa)). The tract at residues 246 to 314 (EKVLEMTIEE…ELGLGLRKDD (69 aa)) is alpha C-terminal domain (alpha-CTD).

Belongs to the RNA polymerase alpha chain family. Homodimer. The RNAP catalytic core consists of 2 alpha, 1 beta, 1 beta' and 1 omega subunit. When a sigma factor is associated with the core the holoenzyme is formed, which can initiate transcription.

It carries out the reaction RNA(n) + a ribonucleoside 5'-triphosphate = RNA(n+1) + diphosphate. DNA-dependent RNA polymerase catalyzes the transcription of DNA into RNA using the four ribonucleoside triphosphates as substrates. This Bacillus cytotoxicus (strain DSM 22905 / CIP 110041 / 391-98 / NVH 391-98) protein is DNA-directed RNA polymerase subunit alpha.